The primary structure comprises 226 residues: Large ribosomal subunit protein uL1 (226 aa).

It belongs to the universal ribosomal protein uL1 family. Part of the 50S ribosomal subunit.

Functionally, binds directly to 23S rRNA. The L1 stalk is quite mobile in the ribosome, and is involved in E site tRNA release. Protein L1 is also a translational repressor protein, it controls the translation of the L11 operon by binding to its mRNA. The sequence is that of Large ribosomal subunit protein uL1 from Treponema denticola (strain ATCC 35405 / DSM 14222 / CIP 103919 / JCM 8153 / KCTC 15104).